The sequence spans 334 residues: Holliday junction branch migration complex subunit RuvB (334 aa).

Residues 4 to 184 (ADRLIQPQLQ…FGIPLRLEFY (181 aa)) form a large ATPase domain (RuvB-L) region. ATP contacts are provided by residues Arg-24, Gly-65, Lys-68, Thr-69, Thr-70, 131 to 133 (EDY), Arg-174, Tyr-184, and Arg-221. Thr-69 lines the Mg(2+) pocket. The tract at residues 185–255 (NVKDLSTIVS…VAEHALDLLD (71 aa)) is small ATPAse domain (RuvB-S). The segment at 258 to 334 (GEGFDYMDRK…YLHFGMIKPE (77 aa)) is head domain (RuvB-H). Positions 294, 313, and 318 each coordinate DNA.

It belongs to the RuvB family. In terms of assembly, homohexamer. Forms an RuvA(8)-RuvB(12)-Holliday junction (HJ) complex. HJ DNA is sandwiched between 2 RuvA tetramers; dsDNA enters through RuvA and exits via RuvB. An RuvB hexamer assembles on each DNA strand where it exits the tetramer. Each RuvB hexamer is contacted by two RuvA subunits (via domain III) on 2 adjacent RuvB subunits; this complex drives branch migration. In the full resolvosome a probable DNA-RuvA(4)-RuvB(12)-RuvC(2) complex forms which resolves the HJ.

It localises to the cytoplasm. It catalyses the reaction ATP + H2O = ADP + phosphate + H(+). Functionally, the RuvA-RuvB-RuvC complex processes Holliday junction (HJ) DNA during genetic recombination and DNA repair, while the RuvA-RuvB complex plays an important role in the rescue of blocked DNA replication forks via replication fork reversal (RFR). RuvA specifically binds to HJ cruciform DNA, conferring on it an open structure. The RuvB hexamer acts as an ATP-dependent pump, pulling dsDNA into and through the RuvAB complex. RuvB forms 2 homohexamers on either side of HJ DNA bound by 1 or 2 RuvA tetramers; 4 subunits per hexamer contact DNA at a time. Coordinated motions by a converter formed by DNA-disengaged RuvB subunits stimulates ATP hydrolysis and nucleotide exchange. Immobilization of the converter enables RuvB to convert the ATP-contained energy into a lever motion, pulling 2 nucleotides of DNA out of the RuvA tetramer per ATP hydrolyzed, thus driving DNA branch migration. The RuvB motors rotate together with the DNA substrate, which together with the progressing nucleotide cycle form the mechanistic basis for DNA recombination by continuous HJ branch migration. Branch migration allows RuvC to scan DNA until it finds its consensus sequence, where it cleaves and resolves cruciform DNA. This chain is Holliday junction branch migration complex subunit RuvB, found in Shewanella sp. (strain MR-7).